Reading from the N-terminus, the 423-residue chain is MAAPRVFPLSCAVQQYAWGKMGSNSEVARLLASSDPLAQIAEDKPYAELWMGTHPRGDAKILDNRISQKTLSQWIAENQDSLGSKVKDTFNGNLPFLFKVLSVETPLSIQAHPNKELAEKLHLQAPQHYPDANHKPEMAIALTPFQGLCGFRPVEEIVTFLKKVPEFQFLIGDEAATHLKQTMSHDSQAVASSLQSCFSHLMKSEKKVVVEQLNLLVKRISQQAAAGNNMEDIFGELLLQLHQQYPGDIGCFAIYFLNLLTLKPGEAMFLEANVPHAYLKGDCVECMACSDNTVRAGLTPKFIDVPTLCEMLSYTPSSSKDRLFLPTRSQEDPYLSIYDPPVPDFTIMKTEVPGSVTEYKVLALDSASILLMVQGTVIASTPTTQTPIPLQRGGVLFIGANESVSLKLTEPKDLLIFRACCLL.

Alanine 2 carries the post-translational modification N-acetylalanine. Serine 102 and serine 108 each carry phosphoserine. Glutamine 110, histidine 112, glutamate 137, and histidine 276 together coordinate Zn(2+). The active site involves arginine 295.

The protein belongs to the mannose-6-phosphate isomerase type 1 family. It depends on Zn(2+) as a cofactor. Expressed in all tissues, but more abundant in heart, brain and skeletal muscle.

It is found in the cytoplasm. The catalysed reaction is D-mannose 6-phosphate = D-fructose 6-phosphate. Its pathway is nucleotide-sugar biosynthesis; GDP-alpha-D-mannose biosynthesis; alpha-D-mannose 1-phosphate from D-fructose 6-phosphate: step 1/2. In terms of biological role, isomerase that catalyzes the interconversion of fructose-6-P and mannose-6-P and has a critical role in the supply of D-mannose derivatives required for many eukaryotic glycosylation reactions. This is Mannose-6-phosphate isomerase from Homo sapiens (Human).